Here is a 210-residue protein sequence, read N- to C-terminus: Fimbriae Z protein (210 aa).

In terms of domain architecture, Response regulatory spans 5-121 (SVIIMDTHPI…DIFHAVQMIL (117 aa)). Asp56 carries the 4-aspartylphosphate modification. Positions 143–208 (NSSTVTVLSN…ELIDYAKLYE (66 aa)) constitute an HTH luxR-type domain. The H-T-H motif DNA-binding region spans 167–186 (NKEIADKLLLSNKTVSAHKS).

The protein localises to the cytoplasm. This chain is Fimbriae Z protein (fimZ), found in Escherichia coli O157:H7.